Consider the following 269-residue polypeptide: Diphthine synthase (269 aa).

Residues Leu-10, Asp-87, Val-90, 115–116, Leu-166, Ala-209, and His-234 contribute to the S-adenosyl-L-methionine site; that span reads SI.

Belongs to the diphthine synthase family. As to quaternary structure, homodimer.

The catalysed reaction is 2-[(3S)-amino-3-carboxypropyl]-L-histidyl-[translation elongation factor 2] + 3 S-adenosyl-L-methionine = diphthine-[translation elongation factor 2] + 3 S-adenosyl-L-homocysteine + 3 H(+). It functions in the pathway protein modification; peptidyl-diphthamide biosynthesis. Functionally, S-adenosyl-L-methionine-dependent methyltransferase that catalyzes the trimethylation of the amino group of the modified target histidine residue in translation elongation factor 2 (EF-2), to form an intermediate called diphthine. The three successive methylation reactions represent the second step of diphthamide biosynthesis. The sequence is that of Diphthine synthase from Pyrococcus furiosus (strain ATCC 43587 / DSM 3638 / JCM 8422 / Vc1).